We begin with the raw amino-acid sequence, 1064 residues long: Lysine-specific demethylase 4A (1064 aa).

Alanine 2 is modified (N-acetylalanine). One can recognise a JmjN domain in the interval 14–56; the sequence is IMTFYPTMEEFRNFSRYIAYIESQGAHRAGLAKVVPPKEWKPR. Position 132 (tyrosine 132) interacts with 2-oxoglutarate. The region spanning 142–308 is the JmjC domain; sequence EQHVDEWNIG…YGKQAVLCSC (167 aa). 2 residues coordinate Fe cation: histidine 188 and glutamate 190. The 2-oxoglutarate site is built by asparagine 198 and lysine 206. Cysteine 234 and histidine 240 together coordinate Zn(2+). Lysine 241 serves as a coordination point for 2-oxoglutarate. Fe cation is bound at residue histidine 276. Zn(2+)-binding residues include cysteine 306 and cysteine 308. Disordered regions lie at residues 354 to 384, 434 to 489, 502 to 537, 549 to 573, and 590 to 643; these read LKDS…EEGD, LAPV…LDLS, SGSK…QGQE, RGDG…SISE, and NKKT…LSQL. Acidic residues predominate over residues 368–382; that stretch reads ECPEEDVEAADQGEE. Basic and acidic residues predominate over residues 460–472; that stretch reads TEVKFEELKNVKL. The span at 473–482 shows a compositional bias: acidic residues; the sequence is EEEDEEDEPE. A compositionally biased stretch (low complexity) spans 509-525; the sequence is SSSLGSTSSQDSVSSDS. Serine 523 carries the phosphoserine modification. Residues 528-537 show a composition bias toward polar residues; sequence AESVSCQGQE. Over residues 593-608 the composition is skewed to basic residues; that stretch reads TKGRRQPLSKLPRHHP. Residues 597-638 form an interaction with NCOR1 region; the sequence is RQPLSKLPRHHPLVLQECGSDDETSEQLTPEEEAEETEAWAK. Over residues 615–634 the composition is skewed to acidic residues; sequence GSDDETSEQLTPEEEAEETE. The PHD-type 1 zinc-finger motif lies at 709 to 767; sequence MCFTTTGCSTDINLSTPYLEEDGTSMLVSCKKCSVRVHASCYGVPPAKASEEWMCSRCS. A C2HC pre-PHD-type zinc finger spans residues 772–805; that stretch reads EEDCCLCSLRGGALQRANDDRWVHVSCAVAILEA. Residues 828-885 form a PHD-type 2 zinc finger; that stretch reads LKCVFCKKRRKRNAGCCVQCSHGRCPTAFHVSCAQAAGVMMQPDDWPFVVFITCFRHK. Tudor domains follow at residues 897–954 and 955–1011; these read LSIT…CLQL and GPPA…EELP.

It belongs to the JHDM3 histone demethylase family. Interacts with histone deacetylase proteins HDAC1, HDAC2 and HDAC3. Interacts with RB and NCOR1. Interacts with VRK1. Requires Fe(2+) as cofactor. Post-translationally, ubiquitinated by RNF8 and RNF168, leading to its degradation. Degradation promotes accessibility of H4K20me2 mark for DNA repair protein TP53BP1, which is then recruited. Also ubiquitinated by the SCF(FBXO22) complex; leading to proteasomal degradation. In terms of tissue distribution, widely expressed.

The protein localises to the nucleus. The catalysed reaction is N(6),N(6),N(6)-trimethyl-L-lysyl(9)-[histone H3] + 2 2-oxoglutarate + 2 O2 = N(6)-methyl-L-lysyl(9)-[histone H3] + 2 formaldehyde + 2 succinate + 2 CO2. The enzyme catalyses N(6),N(6),N(6)-trimethyl-L-lysyl(36)-[histone H3] + 2 2-oxoglutarate + 2 O2 = N(6)-methyl-L-lysyl(36)-[histone H3] + 2 formaldehyde + 2 succinate + 2 CO2. In terms of biological role, histone demethylase that specifically demethylates 'Lys-9' and 'Lys-36' residues of histone H3, thereby playing a central role in histone code. Does not demethylate histone H3 'Lys-4', H3 'Lys-27' nor H4 'Lys-20'. Demethylates trimethylated H3 'Lys-9' and H3 'Lys-36' residue, while it has no activity on mono- and dimethylated residues. Demethylation of Lys residue generates formaldehyde and succinate. Participates in transcriptional repression of ASCL2 and E2F-responsive promoters via the recruitment of histone deacetylases and NCOR1, respectively. This is Lysine-specific demethylase 4A (Kdm4a) from Mus musculus (Mouse).